The primary structure comprises 508 residues: Alpha-amylase (508 aa).

An N-terminal signal peptide occupies residues 1-19 (MLSLIIAACCVTVALAGTF). A disulfide bond links cysteine 46 and cysteine 102. Residues asparagine 116, arginine 173, and aspartate 182 each coordinate Ca(2+). An intrachain disulfide couples cysteine 156 to cysteine 175. Residue arginine 210 participates in chloride binding. Catalysis depends on aspartate 212, which acts as the Nucleophile. Histidine 216 serves as a coordination point for Ca(2+). Glutamate 248 (proton donor) is an active-site residue. Positions 311 and 349 each coordinate chloride. 2 disulfide bridges follow: cysteine 383–cysteine 389 and cysteine 455–cysteine 467.

The protein belongs to the glycosyl hydrolase 13 family. Monomer. Ca(2+) serves as cofactor. Requires chloride as cofactor.

It catalyses the reaction Endohydrolysis of (1-&gt;4)-alpha-D-glucosidic linkages in polysaccharides containing three or more (1-&gt;4)-alpha-linked D-glucose units.. The protein is Alpha-amylase of Pecten maximus (King scallop).